Reading from the N-terminus, the 85-residue chain is Protein C4 (85 aa).

A lipid anchor (N-myristoyl glycine; by host) is attached at glycine 2. Residues 42–65 (LNPAPTSTPTSTRTETLSNGENSR) form a disordered region. The span at 44 to 59 (PAPTSTPTSTRTETLS) shows a compositional bias: low complexity.

It belongs to the geminiviridae protein AC4/C4 family.

The protein localises to the host cell membrane. Its function is as follows. Pathogenicity determinant. May act as a suppressor of RNA-mediated gene silencing, also known as post-transcriptional gene silencing (PTGS), a mechanism of plant viral defense that limits the accumulation of viral RNAs. This chain is Protein C4, found in Solanum lycopersicum (Tomato).